The primary structure comprises 288 residues: 3'-5' exonuclease (288 aa).

Positions 30-67 are disordered; the sequence is RSSSSSSSAAPTVQATTSVHGHEEDPNQIPNNIRRQLP. Polar residues-rich tracts occupy residues 38–48 and 57–67; these read AAPTVQATTSV and QIPNNIRRQLP. One can recognise a 3'-5' exonuclease domain in the interval 129-279; sequence FVGLDIEWRP…ASWHLYKVLK (151 aa).

As to quaternary structure, interacts with KU70 and KU80. Interacts with RECQL2. Mg(2+) serves as cofactor. The cofactor is Mn(2+). Expressed ubiquitously.

The protein resides in the nucleus. With respect to regulation, activated upon interaction with the KU heterodimer. Not stimulated by ATP. Functionally, exonuclease that digests recessed strands of DNA duplexes in the 3' to 5' direction but hardly single-stranded DNA or blunt-ended duplexes. Also able to digest 3'-protruding strands and 3'-recessed strand termini of duplexes containing mismatched bases. The sequence is that of 3'-5' exonuclease (WEX) from Arabidopsis thaliana (Mouse-ear cress).